A 124-amino-acid polypeptide reads, in one-letter code: UPF0738 protein ABC2521 (124 aa).

It belongs to the UPF0738 family.

The chain is UPF0738 protein ABC2521 from Shouchella clausii (strain KSM-K16) (Alkalihalobacillus clausii).